Consider the following 168-residue polypeptide: Ribosome maturation factor RimP (168 aa).

Belongs to the RimP family.

Its subcellular location is the cytoplasm. Functionally, required for maturation of 30S ribosomal subunits. The protein is Ribosome maturation factor RimP of Bordetella bronchiseptica (strain ATCC BAA-588 / NCTC 13252 / RB50) (Alcaligenes bronchisepticus).